The chain runs to 605 residues: Ankyrin repeat domain-containing protein 13D (605 aa).

ANK repeat units follow at residues 39-68 (RGRTPLELAVSLGNLESVRVLLRHNANVGK) and 72-101 (QGWAVLQEAVSTGDPEMVQLVLQYRDYQRA). Residues 306–333 (AQQHSSHTGAPVQQAASPTNPTAISPEE) are disordered. Residues 319–328 (QAASPTNPTA) are compositionally biased toward polar residues. UIM domains follow at residues 482–501 (EDDDLLQFAIQQSLLEAGTE) and 528–547 (EEQLQLERALQESLQLSTEP). The tract at residues 541–605 (LQLSTEPRGP…RILQLSLTEH (65 aa)) is disordered. Positions 550-563 (PGSPPRTPPAPGPP) are enriched in pro residues. Ser-552 bears the Phosphoserine mark. Residue Thr-556 is modified to Phosphothreonine. The segment covering 564-575 (SFEEQLRLALEL) has biased composition (low complexity). 2 consecutive UIM domains span residues 564–583 (SFEEQLRLALELSSREQEER) and 589–605 (QEEEDLQRILQLSLTEH). The segment covering 576-589 (SSREQEERERRGQQ) has biased composition (basic and acidic residues).

Interacts with EGFR (ubiquitinated); the interaction is direct and may regulate EGFR internalization.

The protein localises to the cell membrane. The protein resides in the late endosome. In terms of biological role, ubiquitin-binding protein that specifically recognizes and binds 'Lys-63'-linked ubiquitin. Does not bind 'Lys-48'-linked ubiquitin. Positively regulates the internalization of ligand-activated EGFR by binding to the Ub moiety of ubiquitinated EGFR at the cell membrane. In Homo sapiens (Human), this protein is Ankyrin repeat domain-containing protein 13D (ANKRD13D).